Reading from the N-terminus, the 190-residue chain is Membrane protein FAM174A (190 aa).

An N-terminal signal peptide occupies residues methionine 1–serine 29. Asparagine 27 and asparagine 83 each carry an N-linked (GlcNAc...) asparagine glycan. The Extracellular segment spans residues valine 30–arginine 123. A disordered region spans residues proline 37 to proline 119. The helical transmembrane segment at alanine 124 to valine 144 threads the bilayer. Topologically, residues arginine 145–arginine 190 are cytoplasmic. Positions leucine 168–arginine 190 are disordered. Residues glutamate 172 to threonine 181 show a composition bias toward acidic residues.

The protein belongs to the FAM174 family.

Its subcellular location is the membrane. The protein is Membrane protein FAM174A (Fam174a) of Rattus norvegicus (Rat).